The chain runs to 344 residues: Heat-inducible transcription repressor HrcA (344 aa).

The protein belongs to the HrcA family.

Negative regulator of class I heat shock genes (grpE-dnaK-dnaJ and groELS operons). Prevents heat-shock induction of these operons. This chain is Heat-inducible transcription repressor HrcA, found in Corynebacterium aurimucosum (strain ATCC 700975 / DSM 44827 / CIP 107346 / CN-1) (Corynebacterium nigricans).